We begin with the raw amino-acid sequence, 352 residues long: N-acetyl-gamma-glutamyl-phosphate reductase (352 aa).

Cysteine 155 is a catalytic residue.

It belongs to the NAGSA dehydrogenase family. Type 1 subfamily.

The protein resides in the cytoplasm. The enzyme catalyses N-acetyl-L-glutamate 5-semialdehyde + phosphate + NADP(+) = N-acetyl-L-glutamyl 5-phosphate + NADPH + H(+). It functions in the pathway amino-acid biosynthesis; L-arginine biosynthesis; N(2)-acetyl-L-ornithine from L-glutamate: step 3/4. Functionally, catalyzes the NADPH-dependent reduction of N-acetyl-5-glutamyl phosphate to yield N-acetyl-L-glutamate 5-semialdehyde. The chain is N-acetyl-gamma-glutamyl-phosphate reductase from Rippkaea orientalis (strain PCC 8801 / RF-1) (Cyanothece sp. (strain PCC 8801)).